Reading from the N-terminus, the 388-residue chain is Deoxyguanosinetriphosphate triphosphohydrolase-like protein (388 aa).

Positions 1-32 (MSVGMAAPRAPYSCDPDRSRGRLFAEPPSRTR) are disordered. The region spanning 69-205 (RLTHSLEVAQ…AALADDIAYD (137 aa)) is the HD domain.

Belongs to the dGTPase family. Type 2 subfamily.

The sequence is that of Deoxyguanosinetriphosphate triphosphohydrolase-like protein from Bradyrhizobium sp. (strain ORS 278).